Here is a 137-residue protein sequence, read N- to C-terminus: MSITYKKDEKDLKNNTNNSKKKFIAKEFQSLLCVFTALRGTQITIQLRSNCEIYGTITNVDAYLNIELSDAKLTNTRYKNKRDEHVQEILIQSRNIRFIQIPDKIDLNSLLYLYSKQLSQSKKKYERTLRKPPPPTK.

The Sm domain maps to 30–105 (SLLCVFTALR…IRFIQIPDKI (76 aa)).

This is an uncharacterized protein from Dictyostelium discoideum (Social amoeba).